The following is a 308-amino-acid chain: Mitochondrial import receptor subunit TOM40B (308 aa).

A disordered region spans residues 1 to 29; it reads MGNTLGLAPMGTLPRRSHRREEPLPNPGS. The required for mitochondrial targeting stretch occupies residues 281 to 308; that stretch reads PLPVTLALGAFLNHWRNRFHCGFSITVG.

The protein belongs to the Tom40 family. As to quaternary structure, forms part of the preprotein translocase of the outer mitochondrial membrane (TOM complex) containing TOMM22, TOMM40, TOMM40L and TOMM70. Interacts with mitochondrial targeting sequences.

The protein localises to the mitochondrion outer membrane. In terms of biological role, potential channel-forming protein implicated in import of protein precursors into mitochondria. The polypeptide is Mitochondrial import receptor subunit TOM40B (Tomm40l) (Mus musculus (Mouse)).